The chain runs to 401 residues: S-adenosylmethionine synthase (401 aa).

ATP is bound at residue 136–141 (GTGSSD). The tract at residues 278 to 305 (GDDGSVGRGNRSNGLITPSRPMSMEATS) is disordered.

This sequence belongs to the AdoMet synthase 2 family. It depends on Mg(2+) as a cofactor.

The catalysed reaction is L-methionine + ATP + H2O = S-adenosyl-L-methionine + phosphate + diphosphate. It functions in the pathway amino-acid biosynthesis; S-adenosyl-L-methionine biosynthesis; S-adenosyl-L-methionine from L-methionine: step 1/1. In terms of biological role, catalyzes the formation of S-adenosylmethionine from methionine and ATP. This chain is S-adenosylmethionine synthase, found in Methanococcoides burtonii (strain DSM 6242 / NBRC 107633 / OCM 468 / ACE-M).